Reading from the N-terminus, the 354-residue chain is Polyprenal reductase 1 (354 aa).

The next 6 membrane-spanning stretches (helical) occupy residues 11 to 31 (PLLCLAWIATTLPIIVAALPI), 78 to 98 (FMHFYVVGVLATTILLLAIWF), 141 to 158 (YHVWRTVFVLLLMEIQVL), 176 to 196 (MHIVGYLTGLFYYVAAPLSLA), 235 to 255 (PLLKLGWTQWIGAVIFIWGSL), and 301 to 321 (GMLVASGGEDIPVWFLFVFVI).

It belongs to the steroid 5-alpha reductase family. Polyprenal reductase subfamily.

The protein localises to the cell membrane. It catalyses the reaction a di-trans,poly-cis-dolichal + NADP(+) = a di-trans,poly-cis-polyprenal + NADPH + H(+). It participates in protein modification; protein glycosylation. In terms of biological role, plays a key role in early steps of protein N-linked glycosylation by being involved in the conversion of polyprenol into dolichol. Acts as a polyprenal reductase that mediates the reduction of polyprenal into dolichal in a NADP-dependent mechanism. Dolichols are required for the synthesis of dolichol-linked monosaccharides and the oligosaccharide precursor used for N-glycosylation. This Oryza sativa subsp. indica (Rice) protein is Polyprenal reductase 1.